The chain runs to 106 residues: Small ribosomal subunit protein uS10 (106 aa).

This sequence belongs to the universal ribosomal protein uS10 family. As to quaternary structure, part of the 30S ribosomal subunit.

Functionally, involved in the binding of tRNA to the ribosomes. This Mycoplasma genitalium (strain ATCC 33530 / DSM 19775 / NCTC 10195 / G37) (Mycoplasmoides genitalium) protein is Small ribosomal subunit protein uS10.